A 266-amino-acid polypeptide reads, in one-letter code: 2-dehydro-3-deoxy-D-gluconate/2-dehydro-3-deoxy-phosphogluconate aldolase (266 aa).

Residues 36–37, 123–125, and 151–153 each bind substrate; these read ST, YNI, and KDS. Lys151 functions as the Schiff-base intermediate with substrate in the catalytic mechanism.

Belongs to the DapA family. KDPG aldolase subfamily. As to quaternary structure, homotetramer; dimer of dimers.

The enzyme catalyses 2-dehydro-3-deoxy-6-phospho-D-gluconate = D-glyceraldehyde 3-phosphate + pyruvate. The catalysed reaction is 2-dehydro-3-deoxy-D-gluconate = D-glyceraldehyde + pyruvate. It carries out the reaction 2-dehydro-3-deoxy-6-phospho-D-galactonate = D-glyceraldehyde 3-phosphate + pyruvate. It catalyses the reaction 2-dehydro-3-deoxy-D-galactonate = D-glyceraldehyde + pyruvate. The protein operates within carbohydrate acid metabolism; 2-dehydro-3-deoxy-D-gluconate degradation; D-glyceraldehyde 3-phosphate and pyruvate from 2-dehydro-3-deoxy-D-gluconate: step 2/2. Functionally, involved in the degradation of glucose via the Entner-Doudoroff pathway. Catalyzes the reversible cleavage of 2-keto-3-deoxy-6-phosphogluconate (KDPG) and 2-keto-3-deoxygluconate (KDG) forming pyruvate and glyceraldehyde 3-phosphate or glyceraldehyde, respectively. It is also able to catalyze the reversible cleavage of 2-keto-3-deoxy-6-phosphogalactonate (KDPGal) and 2-keto-3-deoxygalactonate (KDGal). It is equally active with both D- and L-glyceraldehyde. The protein is 2-dehydro-3-deoxy-D-gluconate/2-dehydro-3-deoxy-phosphogluconate aldolase of Picrophilus torridus (strain ATCC 700027 / DSM 9790 / JCM 10055 / NBRC 100828 / KAW 2/3).